The sequence spans 742 residues: Phosphoribosylformylglycinamidine synthase subunit PurL (742 aa).

His-54 is a catalytic residue. The ATP site is built by Tyr-57 and Lys-96. A Mg(2+)-binding site is contributed by Glu-98. Substrate is bound by residues 99 to 102 (SHNH) and Arg-121. His-100 serves as the catalytic Proton acceptor. Asp-122 lines the Mg(2+) pocket. Residue Gln-245 coordinates substrate. Residue Asp-273 participates in Mg(2+) binding. 317–319 (ESQ) contributes to the substrate binding site. ATP contacts are provided by Asp-500 and Gly-537. Asn-538 is a Mg(2+) binding site. Residue Ser-540 coordinates substrate.

Belongs to the FGAMS family. In terms of assembly, monomer. Part of the FGAM synthase complex composed of 1 PurL, 1 PurQ and 2 PurS subunits.

The protein localises to the cytoplasm. It catalyses the reaction N(2)-formyl-N(1)-(5-phospho-beta-D-ribosyl)glycinamide + L-glutamine + ATP + H2O = 2-formamido-N(1)-(5-O-phospho-beta-D-ribosyl)acetamidine + L-glutamate + ADP + phosphate + H(+). The protein operates within purine metabolism; IMP biosynthesis via de novo pathway; 5-amino-1-(5-phospho-D-ribosyl)imidazole from N(2)-formyl-N(1)-(5-phospho-D-ribosyl)glycinamide: step 1/2. Functionally, part of the phosphoribosylformylglycinamidine synthase complex involved in the purines biosynthetic pathway. Catalyzes the ATP-dependent conversion of formylglycinamide ribonucleotide (FGAR) and glutamine to yield formylglycinamidine ribonucleotide (FGAM) and glutamate. The FGAM synthase complex is composed of three subunits. PurQ produces an ammonia molecule by converting glutamine to glutamate. PurL transfers the ammonia molecule to FGAR to form FGAM in an ATP-dependent manner. PurS interacts with PurQ and PurL and is thought to assist in the transfer of the ammonia molecule from PurQ to PurL. This chain is Phosphoribosylformylglycinamidine synthase subunit PurL, found in Geobacillus sp. (strain WCH70).